Reading from the N-terminus, the 193-residue chain is AP-3 complex subunit sigma-2 (193 aa).

The protein belongs to the adaptor complexes small subunit family. In terms of assembly, adaptor protein complex 3 (AP-3) is a heterotetramer composed of two large adaptins (delta-type subunit AP3D1 and beta-type subunit AP3B1 or AP3B2), a medium adaptin (mu-type subunit AP3M1 or AP3M2) and a small adaptin (sigma-type subunit APS1 or AP3S2). Interacts with AGAP1. AP-3 associates with the BLOC-1 complex. As to expression, present in all adult tissues examined.

The protein localises to the golgi apparatus. It is found in the cytoplasmic vesicle membrane. In terms of biological role, part of the AP-3 complex, an adaptor-related complex which is not clathrin-associated. The complex is associated with the Golgi region as well as more peripheral structures. It facilitates the budding of vesicles from the Golgi membrane and may be directly involved in trafficking to lysosomes. In concert with the BLOC-1 complex, AP-3 is required to target cargos into vesicles assembled at cell bodies for delivery into neurites and nerve terminals. The polypeptide is AP-3 complex subunit sigma-2 (AP3S2) (Homo sapiens (Human)).